The primary structure comprises 350 residues: DNA-directed RNA polymerase subunit alpha (350 aa).

Residues 1–226 are alpha N-terminal domain (alpha-NTD); it reads MLISQRPTLS…ELFGLARELN (226 aa). The tract at residues 241 to 350 is alpha C-terminal domain (alpha-CTD); the sequence is ADHIASFALP…NQDYAETEQL (110 aa). The disordered stretch occupies residues 328–350; it reads GTWTSDAGYDLDDNQDYAETEQL. The segment covering 336–350 has biased composition (acidic residues); that stretch reads YDLDDNQDYAETEQL.

The protein belongs to the RNA polymerase alpha chain family. In terms of assembly, homodimer. The RNAP catalytic core consists of 2 alpha, 1 beta, 1 beta' and 1 omega subunit. When a sigma factor is associated with the core the holoenzyme is formed, which can initiate transcription.

It carries out the reaction RNA(n) + a ribonucleoside 5'-triphosphate = RNA(n+1) + diphosphate. DNA-dependent RNA polymerase catalyzes the transcription of DNA into RNA using the four ribonucleoside triphosphates as substrates. This chain is DNA-directed RNA polymerase subunit alpha, found in Mycolicibacterium smegmatis (strain ATCC 700084 / mc(2)155) (Mycobacterium smegmatis).